The sequence spans 483 residues: RNA-binding protein Nova-1 (483 aa).

The disordered stretch occupies residues 1-44 (MMAAAPIQQNGTHTGVPIDLDPPDSRKRPLEAPPEAGSTKRTNT). The Bipartite nuclear localization signal signature appears at 27 to 43 (KRPLEAPPEAGSTKRTN). KH domains are found at residues 49-116 (QYFL…HGFI), 147-213 (IKQV…VELI), and 397-464 (KDVV…QYLI). Residues 395-479 (GSKDVVEIAV…YEQGVRAANP (85 aa)) are required for RNA binding.

In terms of assembly, interacts with PTBP2; the interaction is direct.

The protein localises to the nucleus. In terms of biological role, functions to regulate alternative splicing in neurons by binding pre-mRNA in a sequence-specific manner to activate exon inclusion or exclusion. It binds specifically to the sequences 5'-YCAY-3' and regulates splicing in only a subset of regulated exons. Binding to an exonic 5'-YCAY-3' cluster changes the protein complexes assembled on pre-mRNA, blocking U1 snRNP binding and exon inclusion, whereas binding to an intronic 5'-YCAY-3' cluster enhances spliceosome assembly and exon inclusion. Binding to 5'-YCAY-3' clusters results in a local and asymmetric action to regulate spliceosome assembly and alternative splicing in neurons. Binding to an exonic 5'-YCAY-3' cluster changed the protein complexes assembled on pre-mRNA, blocking U1 snRNP (small nuclear ribonucleoprotein) binding and exon inclusion, whereas binding to an intronic 5'-YCAY-3' cluster enhanced spliceosome assembly and exon inclusion. With NOVA1, they perform unique biological functions in different brain areas and cell types. Autoregulates its own expression by acting as a splicing repressor. Acts to activate the inclusion of exon E3A in the glycine receptor alpha-2 chain and of exon E9 in gamma-aminobutyric-acid receptor gamma-2 subunit via a distal downstream UCAU-rich intronic splicing enhancer. Acts to regulate a novel glycine receptor alpha-2 chain splice variant (alpha-2N) in developing spinal cord. This Macaca fascicularis (Crab-eating macaque) protein is RNA-binding protein Nova-1 (NOVA1).